Here is a 685-residue protein sequence, read N- to C-terminus: MESTTAFSAVTSALGTLDVHIMAPYLWMLVLGFVIAFVLAFSVGANDVANSFGTAVGSGVVTLRQACILASIFETVGSVLLGAKVSETIRKGLIDVTMYNSTQELLMAGSISAMFGSAVWQLAASFMKLPISGTHCIVGATIGFSLVAKGQQGVKWIELLRIVLSWFISPLLSGIMSALLFLFVRMFILRKADPVPNGLRALPVFYACTIGINLFSIMFTGAPLLGFDKVPLWGIILISVGCAVLCALIVWFVVCPRMKRKIECEFKSSPSESPLMDKKNQELRCPILKPDPEDLKLPVDGGIVAEVKVPILDMVSVSRTEERTVTFKMGECDDPIEKEKLNSMETNIDQPTNGSVQLPNGNHVQFSQAVSNQMNSSGQYQYHTVHKDSGLYKDLLHKLHLAKMGDCMGDSGDKPLRRNNSYTSYTMAICGMPLDSLRNRDTEARPDEAEKSTVHGADGKKRIRMDSYTSYCNAVADTHMDVEAEEQEEGSVEDVETDRKSSSSSLEERHDQDKPEVSLLFQFLQILTACFGSFAHGGNDVSNAIGPLVALYLVYETGDVTTKAATPIWLLLYGGIGICIGLWVWGRRVIQTMGKDLTPITPSSGFSIELASALTVVIASNVGLPISTTHCKVGSVVSVGWLRSKKAVDWRLFRNIFLAWFVTVPISGLISAGIMALFKYAILKV.

6 helical membrane-spanning segments follow: residues 21–41, 66–86, 106–126, 162–182, 207–227, and 234–254; these read IMAP…VLAF, ACIL…AKVS, LMAG…AASF, IVLS…LLFL, ACTI…LLGF, and GIIL…WFVV. 2 disordered regions span residues 438-458 and 483-513; these read RNRD…HGAD and EAEE…HDQD. Over residues 483–496 the composition is skewed to acidic residues; the sequence is EAEEQEEGSVEDVE. Residues 497–513 are compositionally biased toward basic and acidic residues; that stretch reads TDRKSSSSSLEERHDQD. Helical transmembrane passes span 517 to 537, 565 to 585, 606 to 626, and 656 to 676; these read VSLL…FAHG, ATPI…LWVW, FSIE…GLPI, and IFLA…GIMA.

It belongs to the inorganic phosphate transporter (PiT) (TC 2.A.20) family.

It is found in the membrane. Sodium-phosphate symporter which plays a fundamental housekeeping role in phosphate transport. The polypeptide is Sodium-dependent phosphate transporter 1-A (slc20a1-a) (Xenopus laevis (African clawed frog)).